A 448-amino-acid polypeptide reads, in one-letter code: Chromosomal replication initiator protein DnaA (448 aa).

A domain I, interacts with DnaA modulators region spans residues 1–73 (MNTHLTETWE…VNALKLLTSK (73 aa)). Residues 73-109 (KKYNIDFIVTTEEKIEENQKNHNNEKSNIVVNDEMST) form a domain II region. Positions 110-326 (MLNPKYTFDS…GALIRIVAFS (217 aa)) are domain III, AAA+ region. The ATP site is built by Gly154, Gly156, Lys157, and Thr158. The interval 327–448 (SLTNKEISID…KELNKRINQK (122 aa)) is domain IV, binds dsDNA.

Belongs to the DnaA family. In terms of assembly, oligomerizes as a right-handed, spiral filament on DNA at oriC.

Its subcellular location is the cytoplasm. In terms of biological role, plays an essential role in the initiation and regulation of chromosomal replication. ATP-DnaA binds to the origin of replication (oriC) to initiate formation of the DNA replication initiation complex once per cell cycle. Binds the DnaA box (a 9 base pair repeat at the origin) and separates the double-stranded (ds)DNA. Forms a right-handed helical filament on oriC DNA; dsDNA binds to the exterior of the filament while single-stranded (ss)DNA is stabiized in the filament's interior. The ATP-DnaA-oriC complex binds and stabilizes one strand of the AT-rich DNA unwinding element (DUE), permitting loading of DNA polymerase. After initiation quickly degrades to an ADP-DnaA complex that is not apt for DNA replication. Binds acidic phospholipids. This Clostridium botulinum (strain ATCC 19397 / Type A) protein is Chromosomal replication initiator protein DnaA.